The primary structure comprises 1379 residues: ABC multidrug transporter MDR2 (1379 aa).

The chain crosses the membrane as a helical span at residues 65-85; the sequence is IALIVIGTIAGIGAGIPFPLL. An ABC transmembrane type-1 1 domain is found at 69-367; it reads VIGTIAGIGA…MAPFMHIFAS (299 aa). An N-linked (GlcNAc...) asparagine glycan is attached at asparagine 97. The next 5 helical transmembrane spans lie at 119-139, 193-213, 215-235, 301-321, and 336-356; these read VLQVIYVSILNFVCMYIHTGC, KVGLFIGTISYFVAAYIVAFL, VATIAAMLMSVVPIYFLMAFG, IQFGMLYFVAYASNALAFWQG, and VSVGAVYTVIFVLLDASFVLS. One can recognise an ABC transporter 1 domain in the interval 403–682; it reads IELQDVTFNY…DGVYAGMVRL (280 aa). 438 to 445 contributes to the ATP binding site; the sequence is GTSGSGKS. Residues asparagine 552 and asparagine 633 are each glycosylated (N-linked (GlcNAc...) asparagine). Positions 738–758 are disordered; that stretch reads YMPEEADSLPTEPENEKEKPK. 4 consecutive transmembrane segments (helical) span residues 781–801, 820–840, 901–921, and 922–942; these read LGLITSIMIGVSYTGEAVIFG, GMLFGLLFFILAIVKFAAVIV, IGVLFSTVANLFAGVILSHVI, and AWRIAVVLLATLPVLLASGVL. The region spanning 781-1068 is the ABC transmembrane type-1 2 domain; that stretch reads LGLITSIMIG…MFALVPDISK (288 aa). The N-linked (GlcNAc...) asparagine glycan is linked to asparagine 989. The next 2 membrane-spanning stretches (helical) occupy residues 1008–1028 and 1032–1052; these read FWLSLAYSISTLVYALAYWWG and ILAGMYTQVQFFIVLPALLFS. One can recognise an ABC transporter 2 domain in the interval 1135–1374; it reads VQFRNVHFRY…CESYRANVIH (240 aa). 1170 to 1177 is an ATP binding site; sequence GPSGSGKS.

This sequence belongs to the ABC transporter superfamily. ABCB family. Multidrug resistance exporter (TC 3.A.1.201) subfamily.

It localises to the cell membrane. Functionally, pleiotropic ABC efflux transporter that may be involved in the modulation susceptibility to a wide range of unrelated cytotoxic compounds. The polypeptide is ABC multidrug transporter MDR2 (Trichophyton equinum (strain ATCC MYA-4606 / CBS 127.97) (Horse ringworm fungus)).